Consider the following 430-residue polypeptide: Dihydroorotase (430 aa).

Residues H57 and H59 each coordinate Zn(2+). Substrate contacts are provided by residues 59 to 61 (HLR) and N91. D151, H178, and H231 together coordinate Zn(2+). N277 is a binding site for substrate. D304 is a Zn(2+) binding site. Residue D304 is part of the active site. Substrate-binding positions include H308 and 322-323 (PG).

This sequence belongs to the metallo-dependent hydrolases superfamily. DHOase family. Class I DHOase subfamily. Zn(2+) serves as cofactor.

It catalyses the reaction (S)-dihydroorotate + H2O = N-carbamoyl-L-aspartate + H(+). It participates in pyrimidine metabolism; UMP biosynthesis via de novo pathway; (S)-dihydroorotate from bicarbonate: step 3/3. In terms of biological role, catalyzes the reversible cyclization of carbamoyl aspartate to dihydroorotate. This chain is Dihydroorotase, found in Mycobacterium bovis (strain ATCC BAA-935 / AF2122/97).